Reading from the N-terminus, the 293-residue chain is Elongation factor Ts (293 aa).

Positions 80–83 are involved in Mg(2+) ion dislocation from EF-Tu; that stretch reads TDFV.

It belongs to the EF-Ts family.

The protein resides in the cytoplasm. Functionally, associates with the EF-Tu.GDP complex and induces the exchange of GDP to GTP. It remains bound to the aminoacyl-tRNA.EF-Tu.GTP complex up to the GTP hydrolysis stage on the ribosome. This is Elongation factor Ts from Burkholderia cenocepacia (strain HI2424).